The primary structure comprises 303 residues: Ferrochelatase (303 aa).

Fe cation-binding residues include His185 and Glu262.

It belongs to the ferrochelatase family.

The protein resides in the cytoplasm. The enzyme catalyses heme b + 2 H(+) = protoporphyrin IX + Fe(2+). The protein operates within porphyrin-containing compound metabolism; protoheme biosynthesis; protoheme from protoporphyrin-IX: step 1/1. In terms of biological role, catalyzes the ferrous insertion into protoporphyrin IX. This is Ferrochelatase from Campylobacter jejuni subsp. jejuni serotype O:2 (strain ATCC 700819 / NCTC 11168).